The chain runs to 560 residues: Arginine--tRNA ligase (560 aa).

The 'HIGH' region motif lies at 164–174 (FYYNDAGNQID).

This sequence belongs to the class-I aminoacyl-tRNA synthetase family. In terms of assembly, monomer.

The protein resides in the cytoplasm. The catalysed reaction is tRNA(Arg) + L-arginine + ATP = L-arginyl-tRNA(Arg) + AMP + diphosphate. This is Arginine--tRNA ligase from Bordetella pertussis (strain Tohama I / ATCC BAA-589 / NCTC 13251).